The chain runs to 103 residues: Large ribosomal subunit protein bL21 (103 aa).

This sequence belongs to the bacterial ribosomal protein bL21 family. Part of the 50S ribosomal subunit. Contacts protein L20.

Functionally, this protein binds to 23S rRNA in the presence of protein L20. The chain is Large ribosomal subunit protein bL21 from Thermobifida fusca (strain YX).